Here is a 243-residue protein sequence, read N- to C-terminus: CAVP-target protein (243 aa).

The disordered stretch occupies residues 1 to 22 (PKPPAEAKPAAKPAAPPAAANP). A compositionally biased stretch (low complexity) spans 7–20 (AKPAAKPAAPPAAA). The IQ domain occupies 35 to 62 (SAATRIQASFRMHKNRMALKEKSIPKFS). 2 consecutive Ig-like C2-type domains span residues 59–150 (PKFS…LALE) and 151–243 (VPAK…VKVN).

This protein is the target of CAVP, which binds to it in a calcium-dependent manner. The polypeptide is CAVP-target protein (Branchiostoma lanceolatum (Common lancelet)).